A 583-amino-acid chain; its full sequence is L-arabonate dehydratase (583 aa).

[4Fe-4S] cluster-binding residues include Cys56, Cys124, and Cys197.

Belongs to the IlvD/Edd family. Homodimer. The cofactor is [4Fe-4S] cluster.

The enzyme catalyses L-arabinonate = 2-dehydro-3-deoxy-L-arabinonate + H2O. With respect to regulation, activity is enhanced by Mg(2+), being optimal with a concentration of 1-10 mM Mg(2+). Catalyzes the dehydration of L-arabonate to L-2-keto-3-deoxyarabonate (L-KDA). Is involved in a degradation pathway of L-arabinose that allows A.brasilense to grow on L-arabinose as a sole carbon source. To a lesser extent, can also use D-xylonate as substrate, but not D-galactonate, D-arabonate, and D-gluconate. This chain is L-arabonate dehydratase (araC), found in Azospirillum brasilense.